The chain runs to 263 residues: Chymotrypsinogen B (263 aa).

Positions 1–18 are cleaved as a signal peptide; the sequence is MASLWLLSCFSLVGAAFG. Cystine bridges form between Cys19–Cys140, Cys60–Cys76, Cys154–Cys219, Cys186–Cys200, and Cys209–Cys238. One can recognise a Peptidase S1 domain in the interval 34-261; sequence IVNGEDAVPG…LIPWVQKILA (228 aa). The active-site Charge relay system is His75. Ser93 carries the phosphoserine modification. Asp120 serves as the catalytic Charge relay system. Ser213 functions as the Charge relay system in the catalytic mechanism.

The protein belongs to the peptidase S1 family.

It localises to the secreted. The protein resides in the extracellular space. It carries out the reaction Preferential cleavage: Tyr-|-Xaa, Trp-|-Xaa, Phe-|-Xaa, Leu-|-Xaa.. In Homo sapiens (Human), this protein is Chymotrypsinogen B.